Reading from the N-terminus, the 103-residue chain is Matrix Gla protein (103 aa).

The first 19 residues, 1–19, serve as a signal peptide directing secretion; that stretch reads MKSLLLLSVLAALAVAALC. Residue glutamate 21 is modified to 4-carboxyglutamate. Residues serine 22, serine 25, and serine 28 each carry the phosphoserine modification. The 47-residue stretch at 51-97 folds into the Gla domain; that stretch reads RAKAQERIRELNKPPYELNREACDDYKLCERYAMVYGYNAAYNRYFR. Glutamate 56, glutamate 60, glutamate 67, and glutamate 71 each carry 4-carboxyglutamate. Cysteine 73 and cysteine 79 form a disulfide bridge.

This sequence belongs to the osteocalcin/matrix Gla protein family. Requires vitamin K-dependent gamma-carboxylation for its function.

It localises to the secreted. Its function is as follows. Associates with the organic matrix of bone and cartilage. Thought to act as an inhibitor of bone formation. This chain is Matrix Gla protein (MGP), found in Sus scrofa (Pig).